Reading from the N-terminus, the 197-residue chain is Phospholipid hydroperoxide glutathione peroxidase (197 aa).

Residue serine 40 is modified to Phosphoserine. Residue selenocysteine 73 is part of the active site. Position 73 (selenocysteine 73) is a non-standard amino acid, selenocysteine.

The protein belongs to the glutathione peroxidase family. Monomer. Has a tendency to form higher mass oligomers. Interacts with FUNDC1; this interaction promotes GPX4 recruitment into mitochondria through TOM/TIM complex where it is degraded by mitophagy.

It localises to the mitochondrion. It is found in the cytoplasm. It carries out the reaction a hydroperoxy polyunsaturated fatty acid + 2 glutathione = a hydroxy polyunsaturated fatty acid + glutathione disulfide + H2O. The enzyme catalyses 2 glutathione + H2O2 = glutathione disulfide + 2 H2O. The catalysed reaction is tert-butyl hydroperoxide + 2 glutathione = tert-butanol + glutathione disulfide + H2O. It catalyses the reaction cumene hydroperoxide + 2 glutathione = 2-phenylpropan-2-ol + glutathione disulfide + H2O. It carries out the reaction (9S)-hydroperoxy-(10E,12Z)-octadecadienoate + 2 glutathione = (9S)-hydroxy-(10E,12Z)-octadecadienoate + glutathione disulfide + H2O. The enzyme catalyses (13S)-hydroperoxy-(9Z,11E)-octadecadienoate + 2 glutathione = (13S)-hydroxy-(9Z,11E)-octadecadienoate + glutathione disulfide + H2O. The catalysed reaction is (5S)-hydroperoxy-(6E,8Z,11Z,14Z)-eicosatetraenoate + 2 glutathione = (5S)-hydroxy-(6E,8Z,11Z,14Z)-eicosatetraenoate + glutathione disulfide + H2O. It catalyses the reaction (12R)-hydroperoxy-(5Z,8Z,10E,14Z)-eicosatetraenoate + 2 glutathione = (12R)-hydroxy-(5Z,8Z,10E,14Z)-eicosatetraenoate + glutathione disulfide + H2O. It carries out the reaction (12S)-hydroperoxy-(5Z,8Z,10E,14Z)-eicosatetraenoate + 2 glutathione = (12S)-hydroxy-(5Z,8Z,10E,14Z)-eicosatetraenoate + glutathione disulfide + H2O. The enzyme catalyses (15S)-hydroperoxy-(5Z,8Z,11Z,13E)-eicosatetraenoate + 2 glutathione = (15S)-hydroxy-(5Z,8Z,11Z,13E)-eicosatetraenoate + glutathione disulfide + H2O. The catalysed reaction is (5S)-hydroperoxy-(6E,8Z,11Z,14Z,17Z)-eicosapentaenoate + 2 glutathione = (5S)-hydroxy-(6E,8Z,11Z,14Z,17Z)-eicosapentaenoate + glutathione disulfide + H2O. It catalyses the reaction (12S)-hydroperoxy-(5Z,8Z,10E,14Z,17Z)-eicosapentaenoate + 2 glutathione = (12S)-hydroxy-(5Z,8Z,10E,14Z,17Z)-eicosapentaenoate + glutathione disulfide + H2O. It carries out the reaction (15S)-hydroperoxy-(5Z,8Z,11Z,13E,17Z)-eicosapentaenoate + 2 glutathione = (15S)-hydroxy-(5Z,8Z,11Z,13E,17Z)-eicosapentaenoate + glutathione disulfide + H2O. The enzyme catalyses (15S)-hydroperoxy-(11Z,13E)-eicosadienoate + 2 glutathione = (15S)-hydroxy-(11Z,13E)-eicosadienoate + glutathione disulfide + H2O. The catalysed reaction is (17S)-hydroperoxy-(4Z,7Z,10Z,13Z,15E,19Z)-docosahexaenoate + 2 glutathione = (17S)-hydroxy-(4Z,7Z,10Z,13Z,15E,19Z)-docosahexaenoate + glutathione disulfide + H2O. It catalyses the reaction a hydroperoxy-1,2-diacyl-glycero-3-phosphocholine + 2 glutathione = a hydroxy-1,2-diacyl-glycero-3-phosphocholine + glutathione disulfide + H2O. Essential antioxidant peroxidase that directly reduces phospholipid hydroperoxide even if they are incorporated in membranes and lipoproteins. Can also reduce fatty acid hydroperoxide, cholesterol hydroperoxide and thymine hydroperoxide. Plays a key role in protecting cells from oxidative damage by preventing membrane lipid peroxidation. Required to prevent cells from ferroptosis, a non-apoptotic cell death resulting from an iron-dependent accumulation of lipid reactive oxygen species. The presence of selenocysteine (Sec) versus Cys at the active site is essential for life: it provides resistance to overoxidation and prevents cells against ferroptosis. The presence of Sec at the active site is also essential for the survival of a specific type of parvalbumin-positive interneurons, thereby preventing against fatal epileptic seizures. May be required to protect cells from the toxicity of ingested lipid hydroperoxides. Required for normal sperm development and male fertility. Essential for maturation and survival of photoreceptor cells. Plays a role in a primary T-cell response to viral and parasitic infection by protecting T-cells from ferroptosis and by supporting T-cell expansion. Plays a role of glutathione peroxidase in platelets in the arachidonic acid metabolism. Reduces hydroperoxy ester lipids formed by a 15-lipoxygenase that may play a role as down-regulator of the cellular 15-lipoxygenase pathway. Can also reduce small soluble hydroperoxides such as H2O2, cumene hydroperoxide and tert-butyl hydroperoxide. The polypeptide is Phospholipid hydroperoxide glutathione peroxidase (Hylobates lar (Lar gibbon)).